Here is a 128-residue protein sequence, read N- to C-terminus: ATP synthase epsilon chain (128 aa).

The protein belongs to the ATPase epsilon chain family. As to quaternary structure, F-type ATPases have 2 components, CF(1) - the catalytic core - and CF(0) - the membrane proton channel. CF(1) has five subunits: alpha(3), beta(3), gamma(1), delta(1), epsilon(1). CF(0) has three main subunits: a, b and c.

The protein localises to the cell inner membrane. Produces ATP from ADP in the presence of a proton gradient across the membrane. The protein is ATP synthase epsilon chain of Sulfurovum sp. (strain NBC37-1).